A 103-amino-acid polypeptide reads, in one-letter code: Large ribosomal subunit protein bL21 (103 aa).

This sequence belongs to the bacterial ribosomal protein bL21 family. Part of the 50S ribosomal subunit. Contacts protein L20.

This protein binds to 23S rRNA in the presence of protein L20. The chain is Large ribosomal subunit protein bL21 from Pectobacterium carotovorum subsp. carotovorum (strain PC1).